A 146-amino-acid polypeptide reads, in one-letter code: 3-hydroxyacyl-[acyl-carrier-protein] dehydratase FabZ (146 aa).

Histidine 49 is a catalytic residue.

The protein belongs to the thioester dehydratase family. FabZ subfamily.

It localises to the cytoplasm. It catalyses the reaction a (3R)-hydroxyacyl-[ACP] = a (2E)-enoyl-[ACP] + H2O. Involved in unsaturated fatty acids biosynthesis. Catalyzes the dehydration of short chain beta-hydroxyacyl-ACPs and long chain saturated and unsaturated beta-hydroxyacyl-ACPs. This chain is 3-hydroxyacyl-[acyl-carrier-protein] dehydratase FabZ, found in Pseudomonas fluorescens (strain Pf0-1).